Consider the following 294-residue polypeptide: ATP synthase gamma chain (294 aa).

The protein belongs to the ATPase gamma chain family. As to quaternary structure, F-type ATPases have 2 components, CF(1) - the catalytic core - and CF(0) - the membrane proton channel. CF(1) has five subunits: alpha(3), beta(3), gamma(1), delta(1), epsilon(1). CF(0) has three main subunits: a, b and c.

It localises to the cell inner membrane. Functionally, produces ATP from ADP in the presence of a proton gradient across the membrane. The gamma chain is believed to be important in regulating ATPase activity and the flow of protons through the CF(0) complex. This Paraburkholderia xenovorans (strain LB400) protein is ATP synthase gamma chain.